We begin with the raw amino-acid sequence, 273 residues long: MAVVKCKPTSPGRRHVVKVVNPELHKGKPFAPLLEKNSKSGGRNNNGRITTRHIGGGHKQAYRIVDFKRNKDGIPAVVERLEYDPNRSANIALVLYKDGERRYILAPKGLKAGDQIQSGVDAAIKAGNTLPMRNIPVGSTVHNVEMKPGKGGQLARSAGTYVQIVARDGAYVTLRLRSGEMRKVEADCRATLGEVGNAEHMLRVLGKAGAARWRGVRPTVRGTAMNPVDHPHGGGEGRNFGKHPVSPWGLQTKGKKTRSNKRTDKFIVRRRSK.

2 disordered regions span residues 28-53 (KPFA…TTRH) and 221-273 (RGTA…RRSK). The span at 39-48 (KSGGRNNNGR) shows a compositional bias: low complexity.

It belongs to the universal ribosomal protein uL2 family. As to quaternary structure, part of the 50S ribosomal subunit. Forms a bridge to the 30S subunit in the 70S ribosome.

In terms of biological role, one of the primary rRNA binding proteins. Required for association of the 30S and 50S subunits to form the 70S ribosome, for tRNA binding and peptide bond formation. It has been suggested to have peptidyltransferase activity; this is somewhat controversial. Makes several contacts with the 16S rRNA in the 70S ribosome. The protein is Large ribosomal subunit protein uL2 of Klebsiella pneumoniae (strain 342).